Consider the following 406-residue polypeptide: Phosphorylase b kinase gamma catalytic chain, liver/testis isoform (406 aa).

One can recognise a Protein kinase domain in the interval 24 to 291 (YDPKDIIGRG…AEQALQHPFF (268 aa)). ATP is bound by residues 30 to 38 (IGRGVSSVV) and Lys53. Residue Asp153 is the Proton acceptor of the active site. Positions 306–330 (QRFRVAVWTILAAGRVALSSHRLRP) are calmodulin-binding (domain-N). The calmodulin-binding (domain-C) stretch occupies residues 346 to 370 (VRRLIDNCAFRLYGHWVKKGEQQNR).

It belongs to the protein kinase superfamily. CAMK Ser/Thr protein kinase family. In terms of assembly, hexadecamer of 4 heterotetramers, each composed of alpha, beta, gamma, and delta subunits. Alpha (PHKA1 or PHKA2) and beta (PHKB) are regulatory subunits, gamma (PHKG1 or PHKG2) is the catalytic subunit, and delta is calmodulin.

The enzyme catalyses 2 ATP + phosphorylase b = 2 ADP + phosphorylase a.. Catalytic subunit of the phosphorylase b kinase (PHK), which mediates the neural and hormonal regulation of glycogen breakdown (glycogenolysis) by phosphorylating and thereby activating glycogen phosphorylase. May regulate glycogeneolysis in the testis. In vitro, phosphorylates PYGM. The polypeptide is Phosphorylase b kinase gamma catalytic chain, liver/testis isoform (Phkg2) (Mus musculus (Mouse)).